Here is a 736-residue protein sequence, read N- to C-terminus: Melanotransferrin (736 aa).

Residues 1–19 (MRCRSAAMWIFLALRTALG) form the signal peptide. Transferrin-like domains follow at residues 23-357 (VRWC…GLLC) and 366-706 (LRWC…GMQS). Intrachain disulfides connect Cys26–Cys63 and Cys36–Cys54. Asp78 and Tyr107 together coordinate Fe(3+). Residue Asn118 is glycosylated (N-linked (GlcNAc...) asparagine). Cystine bridges form between Cys130/Cys216, Cys172/Cys189, Cys186/Cys199, and Cys257/Cys271. A hydrogencarbonate-binding site is contributed by Thr132. A glycan (N-linked (GlcNAc...) asparagine) is linked at Asn135. The hydrogencarbonate site is built by Arg136, Val138, and Gly139. Tyr210 is a binding site for Fe(3+). His279 and Tyr451 together coordinate Fe(3+). An N-linked (GlcNAc...) asparagine glycan is attached at Asn515. His625 is a Fe(3+) binding site. A lipid anchor (GPI-anchor amidated glycine) is attached at Gly711. Positions 712–736 (AAVGAPGASLLPLLPLAVGLLLSSL) are cleaved as a propeptide — removed in mature form.

The protein belongs to the transferrin family.

It is found in the cell membrane. In terms of biological role, involved in iron cellular uptake. Seems to be internalized and then recycled back to the cell membrane. Binds a single atom of iron per subunit. Could also bind zinc. The chain is Melanotransferrin from Oryctolagus cuniculus (Rabbit).